Reading from the N-terminus, the 103-residue chain is Co-chaperonin GroES (103 aa).

The disordered stretch occupies residues 31–67; sequence GGILLPDTAKEKPQVGEVAQVGPGKRNEDGSRQSPEV.

Belongs to the GroES chaperonin family. In terms of assembly, heptamer of 7 subunits arranged in a ring. Interacts with the chaperonin GroEL.

The protein localises to the cytoplasm. Functionally, together with the chaperonin GroEL, plays an essential role in assisting protein folding. The GroEL-GroES system forms a nano-cage that allows encapsulation of the non-native substrate proteins and provides a physical environment optimized to promote and accelerate protein folding. GroES binds to the apical surface of the GroEL ring, thereby capping the opening of the GroEL channel. The protein is Co-chaperonin GroES of Prochlorococcus marinus (strain NATL2A).